A 393-amino-acid polypeptide reads, in one-letter code: Zinc finger CCCH domain-containing protein 2 (393 aa).

Residues 1 to 71 are disordered; the sequence is MDVVCTEHQM…NRENKEYCYD (71 aa). Over residues 20–37 the composition is skewed to low complexity; the sequence is RKLLLSSKSFPSDSSSPR. Over residues 60 to 69 the composition is skewed to basic and acidic residues; it reads DNNRENKEYC. 2 consecutive C3H1-type zinc fingers follow at residues 122 to 150 and 159 to 181; these read QYSG…HGVF and YRTE…AHSP.

In terms of assembly, interacts with MARD1/FLZ9 and RD21A. As to expression, specifically expressed in seeds.

Its subcellular location is the nucleus. In terms of biological role, probable transcription repressor that functions as a negative regulator of phytochrome-mediated promotion of seed germination. Inhibits seed germination by regulating the expression of gibberellic acid (GA) and abscisic acid (ABA) metabolic genes. Does not regulate the expression of the DELLA genes RGA and RGA1. Activated by PIL5, a phytochrome-interacting basic helix-loop-helix transcription factor. Represses directly JMJ20 and JMJ22 expression in the absence of red light (R) and in far-red (FR) conditions. This chain is Zinc finger CCCH domain-containing protein 2, found in Arabidopsis thaliana (Mouse-ear cress).